The chain runs to 378 residues: Leukocyte elastase inhibitor (378 aa).

Methionine 1 carries the N-acetylmethionine modification. The residue at position 137 (lysine 137) is an N6-acetyllysine. Serine 299 bears the Phosphoserine mark. The interval 350–378 (DFIADHPFIFFIRHNPSSNILFLGRLSSP) is CARD-binding motif (CBM).

This sequence belongs to the serpin family. Ov-serpin subfamily. Monomer. Interacts (via C-terminus) with CASP1; CASP4 (via CARD domain) and CASP5; these interactions regulate the activity of inflammatory caspases. Interacts with PRTN3. Interacts with GZMH.

Its subcellular location is the secreted. The protein resides in the cytoplasm. It localises to the cytolytic granule. The protein localises to the early endosome. In terms of biological role, neutrophil serine protease inhibitor that plays an essential role in the regulation of the innate immune response, inflammation and cellular homeostasis. Acts primarily to protect the cell from proteases released in the cytoplasm during stress or infection. These proteases are important in killing microbes but when released from granules, these potent enzymes also destroy host proteins and contribute to mortality. Regulates the activity of the neutrophil proteases elastase, cathepsin G, proteinase-3, chymase, chymotrypsin, and kallikrein-3. Also acts as a potent intracellular inhibitor of GZMH by directly blocking its proteolytic activity. During inflammation, limits the activity of inflammatory caspases CASP1, CASP4 and CASP5 by suppressing their caspase-recruitment domain (CARD) oligomerization and enzymatic activation. When secreted, promotes the proliferation of beta-cells via its protease inhibitory function. May be cleaved leading to a loss of its anti-protease activity and to the appearance of an endonuclease activity. However no catalytic site was identified. The sequence is that of Leukocyte elastase inhibitor (SERPINB1) from Sus scrofa (Pig).